A 220-amino-acid chain; its full sequence is Deoxyribose-phosphate aldolase 2 (220 aa).

Aspartate 89 acts as the Proton donor/acceptor in catalysis. Lysine 151 functions as the Schiff-base intermediate with acetaldehyde in the catalytic mechanism. Lysine 180 functions as the Proton donor/acceptor in the catalytic mechanism.

This sequence belongs to the DeoC/FbaB aldolase family. DeoC type 1 subfamily.

Its subcellular location is the cytoplasm. The catalysed reaction is 2-deoxy-D-ribose 5-phosphate = D-glyceraldehyde 3-phosphate + acetaldehyde. Its pathway is carbohydrate degradation; 2-deoxy-D-ribose 1-phosphate degradation; D-glyceraldehyde 3-phosphate and acetaldehyde from 2-deoxy-alpha-D-ribose 1-phosphate: step 2/2. Its function is as follows. Catalyzes a reversible aldol reaction between acetaldehyde and D-glyceraldehyde 3-phosphate to generate 2-deoxy-D-ribose 5-phosphate. In Staphylococcus aureus (strain MSSA476), this protein is Deoxyribose-phosphate aldolase 2.